The primary structure comprises 133 residues: Large ribosomal subunit protein uL14 (133 aa).

The protein belongs to the universal ribosomal protein uL14 family. As to quaternary structure, part of the 50S ribosomal subunit. Forms a cluster with proteins L3 and L24e, part of which may contact the 16S rRNA in 2 intersubunit bridges.

Its function is as follows. Binds to 23S rRNA. Forms part of two intersubunit bridges in the 70S ribosome. In Nanoarchaeum equitans (strain Kin4-M), this protein is Large ribosomal subunit protein uL14.